The sequence spans 450 residues: UDP-N-acetylmuramoylalanine--D-glutamate ligase (450 aa).

Residue G119–T125 participates in ATP binding.

Belongs to the MurCDEF family.

Its subcellular location is the cytoplasm. The enzyme catalyses UDP-N-acetyl-alpha-D-muramoyl-L-alanine + D-glutamate + ATP = UDP-N-acetyl-alpha-D-muramoyl-L-alanyl-D-glutamate + ADP + phosphate + H(+). Its pathway is cell wall biogenesis; peptidoglycan biosynthesis. Functionally, cell wall formation. Catalyzes the addition of glutamate to the nucleotide precursor UDP-N-acetylmuramoyl-L-alanine (UMA). This is UDP-N-acetylmuramoylalanine--D-glutamate ligase from Streptococcus pneumoniae (strain P1031).